An 860-amino-acid polypeptide reads, in one-letter code: Leucine--tRNA ligase (860 aa).

Residues 42 to 52 (PYPSGRLHMGH) carry the 'HIGH' region motif. Positions 619–623 (KMSKS) match the 'KMSKS' region motif. Residue Lys-622 participates in ATP binding.

This sequence belongs to the class-I aminoacyl-tRNA synthetase family.

The protein resides in the cytoplasm. It carries out the reaction tRNA(Leu) + L-leucine + ATP = L-leucyl-tRNA(Leu) + AMP + diphosphate. This chain is Leucine--tRNA ligase, found in Histophilus somni (strain 129Pt) (Haemophilus somnus).